Reading from the N-terminus, the 238-residue chain is Cysteine-rich venom protein pseudechetoxin-like (238 aa).

The N-terminal stretch at 1-19 is a signal peptide; the sequence is MIAFIVLLSLAAVLQQSSG. The propeptide occupies 20–28; sequence TVDFASESS. Residues 38–164 form the SCP domain; sequence VDKHNALRRS…STKYLYVCQY (127 aa). Cystine bridges form between cysteine 75-cysteine 153, cysteine 92-cysteine 165, cysteine 148-cysteine 162, cysteine 184-cysteine 191, cysteine 187-cysteine 196, cysteine 200-cysteine 233, cysteine 209-cysteine 227, and cysteine 218-cysteine 231. Residues 200–233 form the ShKT domain; that stretch reads CKYEDDFSNCKALAKNSKCQTEWIKSKCPAACFC.

It belongs to the CRISP family. Expressed by the venom gland.

The protein localises to the secreted. Blocks olfactory (CNGA2) and retinal (CNGA1) CNG channel currents. Does not affect neither depolarization- nor caffeine-induced contraction of smooth muscle. The chain is Cysteine-rich venom protein pseudechetoxin-like from Notechis scutatus scutatus (Mainland tiger snake).